The sequence spans 300 residues: Delta-9 desaturase-like 4 protein (300 aa).

Helical transmembrane passes span 39-59 (VVVI…WEAL) and 61-81 (FGLV…HRNL). The Histidine box-1 signature appears at 78–83 (HRNLSH). A Histidine box-2 motif is present at residues 115 to 119 (HRFHH). 2 helical membrane passes run 175–195 (IAVH…LPYL) and 200–220 (GVGI…CHIW). Positions 247–251 (HNNHH) match the Histidine box-3 motif.

It belongs to the fatty acid desaturase type 1 family. Requires Fe cation as cofactor.

Its subcellular location is the endoplasmic reticulum membrane. Its pathway is lipid metabolism; polyunsaturated fatty acid biosynthesis. In Arabidopsis thaliana (Mouse-ear cress), this protein is Delta-9 desaturase-like 4 protein.